A 123-amino-acid chain; its full sequence is MNAVTETAATTTDMPLPFVFTDAAADKVKQLIDEEGNPDLKLRVFVQGGGCSGFQYGFTFDEEVNEDDTVMNKNGVQLLIDSMSYQYLVGAEIDYKDDLNGAQFVIKNPNATTTCGCGSSFSV.

The iron-sulfur cluster site is built by Cys-51, Cys-115, and Cys-117.

Belongs to the HesB/IscA family. In terms of assembly, homodimer. Requires iron-sulfur cluster as cofactor.

Required for insertion of 4Fe-4S clusters. This chain is Putative iron-sulfur cluster insertion protein ErpA, found in Burkholderia cenocepacia (strain HI2424).